The sequence spans 323 residues: 4-hydroxy-3-methylbut-2-enyl diphosphate reductase (323 aa).

[4Fe-4S] cluster is bound at residue Cys13. (2E)-4-hydroxy-3-methylbut-2-enyl diphosphate contacts are provided by His42 and His75. Residues His42 and His75 each contribute to the dimethylallyl diphosphate site. Isopentenyl diphosphate-binding residues include His42 and His75. Cys97 is a [4Fe-4S] cluster binding site. (2E)-4-hydroxy-3-methylbut-2-enyl diphosphate is bound at residue His125. Residue His125 participates in dimethylallyl diphosphate binding. Residue His125 coordinates isopentenyl diphosphate. The active-site Proton donor is the Glu127. Thr168 lines the (2E)-4-hydroxy-3-methylbut-2-enyl diphosphate pocket. Position 198 (Cys198) interacts with [4Fe-4S] cluster. Ser226, Ser227, Asn228, and Ser270 together coordinate (2E)-4-hydroxy-3-methylbut-2-enyl diphosphate. Dimethylallyl diphosphate-binding residues include Ser226, Ser227, Asn228, and Ser270. Isopentenyl diphosphate-binding residues include Ser226, Ser227, Asn228, and Ser270.

This sequence belongs to the IspH family. It depends on [4Fe-4S] cluster as a cofactor.

The catalysed reaction is isopentenyl diphosphate + 2 oxidized [2Fe-2S]-[ferredoxin] + H2O = (2E)-4-hydroxy-3-methylbut-2-enyl diphosphate + 2 reduced [2Fe-2S]-[ferredoxin] + 2 H(+). It carries out the reaction dimethylallyl diphosphate + 2 oxidized [2Fe-2S]-[ferredoxin] + H2O = (2E)-4-hydroxy-3-methylbut-2-enyl diphosphate + 2 reduced [2Fe-2S]-[ferredoxin] + 2 H(+). It participates in isoprenoid biosynthesis; dimethylallyl diphosphate biosynthesis; dimethylallyl diphosphate from (2E)-4-hydroxy-3-methylbutenyl diphosphate: step 1/1. Its pathway is isoprenoid biosynthesis; isopentenyl diphosphate biosynthesis via DXP pathway; isopentenyl diphosphate from 1-deoxy-D-xylulose 5-phosphate: step 6/6. Its function is as follows. Catalyzes the conversion of 1-hydroxy-2-methyl-2-(E)-butenyl 4-diphosphate (HMBPP) into a mixture of isopentenyl diphosphate (IPP) and dimethylallyl diphosphate (DMAPP). Acts in the terminal step of the DOXP/MEP pathway for isoprenoid precursor biosynthesis. This chain is 4-hydroxy-3-methylbut-2-enyl diphosphate reductase, found in Nitrosomonas europaea (strain ATCC 19718 / CIP 103999 / KCTC 2705 / NBRC 14298).